Here is an 887-residue protein sequence, read N- to C-terminus: Translation initiation factor IF-2 (887 aa).

Residues 1-259 are disordered; sequence MSDEQDQGET…KVGDDRRRGA (259 aa). Residues 62 to 94 are compositionally biased toward low complexity; sequence GRPSAPSRASGGAAAPRGLTAAEQAARQRAVVE. Basic and acidic residues-rich tracts occupy residues 95-111 and 119-158; these read QQREAARLEAERREQEK and EEARRKAEEEARAAEEAERLRAEEEARRREEEEAERRRAA. Residues 159-210 are compositionally biased toward low complexity; the sequence is EASQATAAPPAPAAAASPRAAMPAPTAAPARPGAAPARRTAPVPPATSASET. Residues 250 to 259 show a composition bias toward basic and acidic residues; sequence KVGDDRRRGA. A tr-type G domain is found at 386-556; it reads VRPPVVTIMG…LLQAELLDLK (171 aa). Residues 395 to 402 form a G1 region; that stretch reads GHVDHGKT. 395 to 402 contacts GTP; it reads GHVDHGKT. Positions 420–424 are G2; sequence GITQH. The tract at residues 442–445 is G3; it reads DTPG. GTP-binding positions include 442-446 and 496-499; these read DTPGH and NKID. Residues 496–499 form a G4 region; it reads NKID. Positions 532 to 534 are G5; that stretch reads SAL.

This sequence belongs to the TRAFAC class translation factor GTPase superfamily. Classic translation factor GTPase family. IF-2 subfamily.

Its subcellular location is the cytoplasm. Its function is as follows. One of the essential components for the initiation of protein synthesis. Protects formylmethionyl-tRNA from spontaneous hydrolysis and promotes its binding to the 30S ribosomal subunits. Also involved in the hydrolysis of GTP during the formation of the 70S ribosomal complex. The chain is Translation initiation factor IF-2 from Acidiphilium cryptum (strain JF-5).